The chain runs to 228 residues: MRKKRVITCVMAASLTLGSLLPAGYATAKEDSKTTPSYEELALHYKMKSEKISSNGKLVEIEYVSGNETHKVQMNGNDHTVKVDGIEQKGLNFEYDENAANRTNYENNNLKSNEFTTQAAKPKKGYHYVGTLSGHTKAAKNALSVTMSLVGIVPGLGWGSKAATILFSYWAKEQIPDAYYKYDLYEKGAMTDSWYQYATVQFFEDKAHKKKMGKPWTSTPAKVDLPNS.

Positions 1-28 (MRKKRVITCVMAASLTLGSLLPAGYATA) are cleaved as a signal peptide.

The polypeptide is SPbeta prophage-derived uncharacterized protein YomL (yomL) (Bacillus subtilis (strain 168)).